A 299-amino-acid chain; its full sequence is tRNA dimethylallyltransferase (299 aa).

Residue Gly-11–Thr-18 coordinates ATP. Thr-13 to Thr-18 lines the substrate pocket. The tract at residues Asp-36–Gln-39 is interaction with substrate tRNA.

This sequence belongs to the IPP transferase family. As to quaternary structure, monomer. The cofactor is Mg(2+).

It catalyses the reaction adenosine(37) in tRNA + dimethylallyl diphosphate = N(6)-dimethylallyladenosine(37) in tRNA + diphosphate. Functionally, catalyzes the transfer of a dimethylallyl group onto the adenine at position 37 in tRNAs that read codons beginning with uridine, leading to the formation of N6-(dimethylallyl)adenosine (i(6)A). The polypeptide is tRNA dimethylallyltransferase (Streptococcus pyogenes serotype M12 (strain MGAS2096)).